A 601-amino-acid chain; its full sequence is Protein NRT1/ PTR FAMILY 4.4 (601 aa).

Helical transmembrane passes span 44–64 (AALF…AVGN) and 82–102 (ANLV…GGFL). Phosphothreonine is present on Thr112. Transmembrane regions (helical) follow at residues 113 to 133 (MLVF…QAHL), 160 to 180 (TLYT…PNII), 198 to 218 (FFNA…TLLV), 228 to 248 (VGFG…VAGT), 337 to 357 (ILLS…ILAQ), 386 to 406 (AIPY…FVPL), 420 to 440 (LQRI…AALV), 453 to 473 (VMLS…SEMF), 493 to 513 (FLTA…SVLV), and 544 to 564 (HFYW…LFWS).

The protein belongs to the major facilitator superfamily. Proton-dependent oligopeptide transporter (POT/PTR) (TC 2.A.17) family. As to expression, expressed in shoots, roots and stems.

It is found in the membrane. This Arabidopsis thaliana (Mouse-ear cress) protein is Protein NRT1/ PTR FAMILY 4.4 (NPF4.4).